Consider the following 809-residue polypeptide: Lon protease (809 aa).

The region spanning 8-203 is the Lon N-terminal domain; the sequence is LPVVALRNMA…RLCLILADEI (196 aa). Residue 354-361 coordinates ATP; sequence GPPGTGKT. The Lon proteolytic domain maps to 629 to 809; it reads KDEVGIVCGL…MDEVLKHALV (181 aa). Catalysis depends on residues Ser716 and Lys759.

It belongs to the peptidase S16 family. As to quaternary structure, homohexamer. Organized in a ring with a central cavity.

It is found in the cytoplasm. It carries out the reaction Hydrolysis of proteins in presence of ATP.. Its function is as follows. ATP-dependent serine protease that mediates the selective degradation of mutant and abnormal proteins as well as certain short-lived regulatory proteins. Required for cellular homeostasis and for survival from DNA damage and developmental changes induced by stress. Degrades polypeptides processively to yield small peptide fragments that are 5 to 10 amino acids long. Binds to DNA in a double-stranded, site-specific manner. The protein is Lon protease of Lachnoclostridium phytofermentans (strain ATCC 700394 / DSM 18823 / ISDg) (Clostridium phytofermentans).